The chain runs to 1371 residues: Soluble scavenger receptor cysteine-rich domain-containing protein SSC5D (1371 aa).

An N-terminal signal peptide occupies residues 1–16; the sequence is MRGLACLLAMLVGIQA. Residues 20-120 enclose the SRCR 1 domain; that stretch reads LRLADGPHGC…HEEDAGVVCV (101 aa). 3 disulfides stabilise this stretch: C45–C109, C58–C119, and C89–C99. A compositionally biased stretch (low complexity) spans 143-154; sequence LSGELSPSSEEP. The tract at residues 143 to 200 is disordered; sequence LSGELSPSSEEPPITHAPQPAASSQNGPRKKNPRPPKQTKSTRAPVLTNGAPHQERLR. 2 consecutive SRCR domains span residues 199-299 and 305-405; these read LRLV…LVCT and IRLA…AVCD. Intrachain disulfides connect C224/C288, C237/C298, C268/C278, C330/C394, C343/C404, and C374/C384. N377 and N422 each carry an N-linked (GlcNAc...) asparagine glycan. The disordered stretch occupies residues 431–466; the sequence is TSVGQMPGPAGPWPPSASPTAPPEPGPEAGSPQLRL. Positions 439–456 are enriched in pro residues; sequence PAGPWPPSASPTAPPEPG. The region spanning 464–565 is the SRCR 4 domain; the sequence is LRLVAGPSRC…HNEDVGVTCT (102 aa). 3 disulfide bridges follow: C489-C554, C502-C564, and C534-C544. Residues 592-756 are disordered; sequence WLPGELTTKP…AGVPVPSGPF (165 aa). A compositionally biased stretch (polar residues) spans 599-611; that stretch reads TKPSASLTSSVPQ. Residues 622-633 show a composition bias toward basic residues; the sequence is KSTKKWVTKNAR. Positions 653 to 663 are enriched in polar residues; sequence TPTSLHPTART. Positions 665-676 are enriched in basic and acidic residues; that stretch reads ELPKRLTTEAPH. Over residues 698 to 740 the composition is skewed to polar residues; that stretch reads PVVSQSTQGPQEVTSEATTTENPQTSLEPSGENTEGSLESSQD. Residues 741–755 show a composition bias toward low complexity; sequence PATTPTAGVPVPSGP. In terms of domain architecture, SRCR 5 spans 758 to 858; sequence VRLADGPNRC…HEEDVVLTCT (101 aa). 3 disulfide bridges follow: C783-C847, C796-C857, and C827-C837. Disordered stretches follow at residues 888-1270 and 1351-1371; these read RPGH…PFGP and STPV…RGDV. A compositionally biased stretch (polar residues) spans 894–912; sequence SWATTTNTEVPSPATQNLP. Composition is skewed to low complexity over residues 936–957, 981–1004, and 1018–1035; these read KGTP…KSPG, PTSA…RQTS, and GTSS…LPSP. Composition is skewed to polar residues over residues 1039-1086 and 1102-1148; these read ALST…TSEL and SSDS…NPQQ. Residues N1044 and N1131 are each glycosylated (N-linked (GlcNAc...) asparagine). Over residues 1149-1163 the composition is skewed to pro residues; sequence PRSPHPATSPQPPTN. The span at 1164–1189 shows a compositional bias: polar residues; it reads THPSSTPATPTESLPSSRKTELSSPT. Residues 1218 to 1230 show a composition bias toward low complexity; that stretch reads ASESGPSSPSPAS. Positions 1244-1261 are enriched in polar residues; the sequence is RSQTLHSASDHLTQGPTP.

As to quaternary structure, interacts with LGALS1 and laminin. Partially N- and O-glycosylated. In terms of tissue distribution, detected throughout the gastrointestinal and genitourinary tracts, in serosal salivary gland, the exocrine part of pancreas and testis, as well as in a few tubular structures in kidney. Not detected in lung and heart (at protein level). Strongly expressed in testis, kidney and pancreas, with lower levels detected in bone marrow, spleen, lung, liver, colon, stomach and skeletal muscle. Very low levels or no expression detected in thymus, esophagus, jejunum, ileum, duodenum, ovary, uterus, heart, trachea, brain, cerebellum and bladder.

The protein localises to the secreted. It is found in the cytoplasm. Binds to extracellular matrix proteins. Binds to pathogen-associated molecular patterns (PAMPs) present on the cell walls of Gram-positive and Gram-negative bacteria and fungi, behaving as a pattern recognition receptor (PRR). Induces bacterial and fungal aggregation and subsequent inhibition of PAMP-induced cytokine release. Does not possess intrinsic bactericidal activity. May play a role in the innate defense and homeostasis of certain epithelial surfaces. This is Soluble scavenger receptor cysteine-rich domain-containing protein SSC5D (Ssc5d) from Mus musculus (Mouse).